A 612-amino-acid chain; its full sequence is Baculoviral IAP repeat-containing protein 2 (612 aa).

A BIR 1 repeat occupies 46–113 (ELYRMSTYSA…RQFYPSCSFV (68 aa)). Arg-143 carries the post-translational modification Omega-N-methylarginine. At Ser-153 the chain carries Phosphoserine. 2 BIR repeats span residues 177 to 243 (EEAR…CPFL) and 262 to 329 (HSAR…CEFL). Residues Cys-299, Cys-302, His-319, and Cys-326 each contribute to the Zn(2+) site. The region spanning 447–537 (MASGDLSLIR…TLYENLFVEK (91 aa)) is the CARD domain. The RING-type zinc-finger motif lies at 565–600 (CKVCMDREVSIVFIPCGHLVVCQECAPSLRKCPICR).

This sequence belongs to the IAP family. Interacts with DIABLO/SMAC and with PRSS25; these interactions inhibit apoptotic suppressor activity. Interacts with CASP9. Interacts (via BIR domains) with TRAF2; the interaction is required for IKBKE ubiquitination. Interacts with E2F1, RIPK1, RIPK2, RIPK3, RIPK4, BIRC5/survivin and USP19. Interacts with HSP90AB1. Interacts with several death receptors, inclusing FAS, TNFRSF10A and TNFRSF10B. Recruited to TNFRSF10B in the absence of receptor stimulation. When TNFRSF10B is stimulated, further recruited to the receptor and cleaved by caspases. Proteolytic fragments remain associated with TNFRSF10B. Post-translationally, auto-ubiquitinated and degraded by the proteasome in apoptotic cells. Upon stimulation of death receptors, including TNFRSF10B, recruited to receptors and cleaved by caspases. Proteolytic fragments remain associated with the receptors. This cleavage presumably inactivates the protein. As to expression, expressed in heart, brain, spleen, lung, liver, skeletal muscle, kidney and testis.

The protein resides in the cytoplasm. The protein localises to the nucleus. It catalyses the reaction S-ubiquitinyl-[E2 ubiquitin-conjugating enzyme]-L-cysteine + [acceptor protein]-L-lysine = [E2 ubiquitin-conjugating enzyme]-L-cysteine + N(6)-ubiquitinyl-[acceptor protein]-L-lysine.. The CARD domain inhibits the activation of E3 ubiquitin ligase activity by preventing RING domain dimerization and E2 ubiquitin donor binding and activation. The CARD domain-mediated autoinhibition of the E3 ubiquitin-protein ligase activity suppresses cell proliferation and migration. USP19 regulates the stability of BIRC2/c-IAP1 by preventing its ubiquitination. Its function is as follows. Multi-functional protein which regulates not only caspases and apoptosis, but also modulates inflammatory signaling and immunity, mitogenic kinase signaling, and cell proliferation, as well as cell invasion and metastasis. Acts as an E3 ubiquitin-protein ligase regulating NF-kappa-B signaling and regulates both canonical and non-canonical NF-kappa-B signaling by acting in opposite directions: acts as a positive regulator of the canonical pathway and suppresses constitutive activation of non-canonical NF-kappa-B signaling. The target proteins for its E3 ubiquitin-protein ligase activity include: RIPK1, RIPK2, RIPK3, RIPK4, CASP3, CASP7, CASP8, TRAF2, DIABLO/SMAC, MAP3K14/NIK, MAP3K5/ASK1, IKBKG/NEMO, IKBKE and MXD1/MAD1. Can also function as an E3 ubiquitin-protein ligase of the NEDD8 conjugation pathway, targeting effector caspases for neddylation and inactivation. Acts as an important regulator of innate immune signaling via regulation of Toll-like receptors (TLRs), Nodlike receptors (NLRs) and RIG-I like receptors (RLRs), collectively referred to as pattern recognition receptors (PRRs). Protects cells from spontaneous formation of the ripoptosome, a large multi-protein complex that has the capability to kill cancer cells in a caspase-dependent and caspase-independent manner. Suppresses ripoptosome formation by ubiquitinating RIPK1 and CASP8. Can stimulate the transcriptional activity of E2F1. Plays a role in the modulation of the cell cycle. The sequence is that of Baculoviral IAP repeat-containing protein 2 (Birc2) from Mus musculus (Mouse).